Consider the following 182-residue polypeptide: Organic solute transporter subunit beta (182 aa).

The first 20 residues, 1 to 20 (MSGLLKYLFGCFILCLLLQG), serve as a signal peptide directing secretion. At 21–64 (KTHMTSATISKPHETIDIEKQNMTGERNSTLAQQLSFPMEDPTN) the chain is on the extracellular side. Residues Asn-42 and Asn-48 are each glycosylated (N-linked (GlcNAc...) asparagine). The chain crosses the membrane as a helical span at residues 65-85 (WNYAILALAFVVLFLAFLILA). Over 86–182 (QNSRANRTRK…LYTDSKEDDV (97 aa)) the chain is Cytoplasmic.

Belongs to the OST-beta family. As to quaternary structure, interacts with slc51a. The Ost-alpha/Ost-beta complex is a heterodimer composed of alpha (slc51a) and beta (slc51b) subunit; may induce the transport of slc51a from the endoplasmic reticulum to the plasma membrane. In terms of tissue distribution, expressed in liver.

Its subcellular location is the cell membrane. Functionally, essential component of the Ost-alpha/Ost-beta complex, a heterodimer that acts as the intestinal basolateral transporter responsible for bile acid export from enterocytes into portal blood. Efficiently transports the major species of bile acids. May modulate slc51a glycosylation, membrane trafficking and stability activities. Able to transport taurocholate, estrone sulfate, digoxin, and prostaglandin E(2), but not p-aminohippurate or S-dinitrophenyl glutathione. This chain is Organic solute transporter subunit beta (slc51b), found in Leucoraja erinaceus (Little skate).